The chain runs to 144 residues: Giant hemoglobins B chain (144 aa).

Residues 3–144 form the Globin domain; sequence VCGPLQRLKV…LNVITNGIQG (142 aa). His96 serves as a coordination point for heme b.

This sequence belongs to the globin family. In terms of assembly, part of giant hemoglobin C1, V1 and V2. This worm has three different extracellular Hbs: two dissolved in the vascular blood, V1 (CA. 3,500 kDa) and V2 (CA. 400 kDa), and one in the coelomic fluid, C1 (CA. 400 kDa). V1 consists of four heme-containing, globin chains (B-E) and four linker chains (L1-L4). V2 consists of six globin chains (A-F) and C1 consists of five globin chains (A-E).

It localises to the secreted. Its subcellular location is the extracellular space. The sequence is that of Giant hemoglobins B chain from Riftia pachyptila (Vent tube worm).